The primary structure comprises 230 residues: Ribonuclease 3 (230 aa).

The region spanning 5–125 is the RNase III domain; sequence YSRFYNILGY…VIGAIYLDSD (121 aa). Residue Glu-40 participates in Mg(2+) binding. The active site involves Asp-44. Mg(2+) contacts are provided by Asp-111 and Glu-114. Glu-114 is a catalytic residue. The DRBM domain maps to 153-223; the sequence is DSKSKLQEIL…AEKMIEMLSQ (71 aa).

The protein belongs to the ribonuclease III family. As to quaternary structure, homodimer. Mg(2+) serves as cofactor.

The protein localises to the cytoplasm. It catalyses the reaction Endonucleolytic cleavage to 5'-phosphomonoester.. In terms of biological role, digests double-stranded RNA. Involved in the processing of primary rRNA transcript to yield the immediate precursors to the large and small rRNAs (23S and 16S). Processes some mRNAs, and tRNAs when they are encoded in the rRNA operon. Processes pre-crRNA and tracrRNA of type II CRISPR loci if present in the organism. This chain is Ribonuclease 3, found in Francisella tularensis subsp. holarctica (strain LVS).